A 280-amino-acid polypeptide reads, in one-letter code: Pantothenate synthetase (280 aa).

Residue 26–33 participates in ATP binding; it reads MGNLHDGH. The Proton donor role is filled by H33. Q57 is a binding site for (R)-pantoate. Q57 provides a ligand contact to beta-alanine. 147-150 serves as a coordination point for ATP; the sequence is GKKD. A (R)-pantoate-binding site is contributed by Q153. 184–187 serves as a coordination point for ATP; it reads LSSR.

The protein belongs to the pantothenate synthetase family. In terms of assembly, homodimer.

It is found in the cytoplasm. It carries out the reaction (R)-pantoate + beta-alanine + ATP = (R)-pantothenate + AMP + diphosphate + H(+). It participates in cofactor biosynthesis; (R)-pantothenate biosynthesis; (R)-pantothenate from (R)-pantoate and beta-alanine: step 1/1. In terms of biological role, catalyzes the condensation of pantoate with beta-alanine in an ATP-dependent reaction via a pantoyl-adenylate intermediate. This is Pantothenate synthetase from Verminephrobacter eiseniae (strain EF01-2).